Reading from the N-terminus, the 500-residue chain is Perfringolysin O (500 aa).

An N-terminal signal peptide occupies residues 1–28; the sequence is MIRFKKTKLIASIAMALCLFSQPVISFS. 4 beta stranded membrane passes run 189–202, 209–218, 287–296, and 304–316; these read KSQI…NAKV, VDFNAVANNE, SKDVQAAFKA, and KNSQ…YENS. A Conserved undecapeptide motif is present at residues 458 to 468; the sequence is ECTGLAWEWWR. Positions 490–491 match the Cholesterol binding motif; it reads TL.

The protein belongs to the cholesterol-dependent cytolysin family. As to quaternary structure, homooligomeric pore complex of 35 to 50 subunits; when inserted in the host membrane.

The protein localises to the secreted. It is found in the host cell membrane. A cholesterol-dependent toxin that causes cytolysis by forming pores in cholesterol containing host membranes. After binding to target membranes, the protein assembles into a pre-pore complex. A conformation change leads to insertion in the host membrane and formation of an oligomeric pore complex. Cholesterol is required for binding to host cell membranes, membrane insertion and pore formation; cholesterol binding is mediated by a Thr-Leu pair in the C-terminus. Can be reversibly inactivated by oxidation. The polypeptide is Perfringolysin O (pfo) (Clostridium perfringens (strain ATCC 13124 / DSM 756 / JCM 1290 / NCIMB 6125 / NCTC 8237 / Type A)).